The sequence spans 544 residues: uncharacterized protein (544 aa).

The signal sequence occupies residues 1–22; the sequence is MYFSQNAIILVMLMFVISAVFY.

This is an uncharacterized protein from Methanocaldococcus jannaschii (strain ATCC 43067 / DSM 2661 / JAL-1 / JCM 10045 / NBRC 100440) (Methanococcus jannaschii).